Consider the following 431-residue polypeptide: Cyclic GMP-AMP synthase-like receptor (431 aa).

Residues Ser73 and 85–87 (EFD) contribute to the ATP site. Glu85, Asp87, and Asp212 together coordinate Mg(2+). Asp212 contributes to the GTP binding site. Residues Lys290 and 304 to 308 (SYALK) each bind ATP. A Mn(2+)-binding site is contributed by Glu316.

Belongs to the mab-21 family. The cofactor is Mg(2+). Mn(2+) serves as cofactor.

The enzyme catalyses GTP + ATP = 2',3'-cGAMP + 2 diphosphate. The catalysed reaction is GTP + ATP = pppGp(2'-5')A + diphosphate. It catalyses the reaction pppGp(2'-5')A = 2',3'-cGAMP + diphosphate. Its function is as follows. Nucleotidyltransferase that catalyzes the formation of cyclic GMP-AMP (2',3'-cGAMP) from ATP and GTP and plays a key role in innate immunity. Acts as a key sensor of double-stranded RNA (dsRNA), the presence of dsRNA in the cytoplasm being a danger signal that triggers the immune responses. Directly binds dsRNA, activating the nucleotidyltransferase activity, leading to synthesis of 2',3'-cGAMP, a second messenger that binds to and activates Sting, thereby triggering the immune response via activation of the NF-kappa-B transcription factor. This Frankliniella occidentalis (Western flower thrips) protein is Cyclic GMP-AMP synthase-like receptor.